The following is a 124-amino-acid chain: Small ribosomal subunit protein uS12 (124 aa).

Asp-89 carries the 3-methylthioaspartic acid modification.

It belongs to the universal ribosomal protein uS12 family. As to quaternary structure, part of the 30S ribosomal subunit. Contacts proteins S8 and S17. May interact with IF1 in the 30S initiation complex.

Its function is as follows. With S4 and S5 plays an important role in translational accuracy. In terms of biological role, interacts with and stabilizes bases of the 16S rRNA that are involved in tRNA selection in the A site and with the mRNA backbone. Located at the interface of the 30S and 50S subunits, it traverses the body of the 30S subunit contacting proteins on the other side and probably holding the rRNA structure together. The combined cluster of proteins S8, S12 and S17 appears to hold together the shoulder and platform of the 30S subunit. In Arthrobacter sp. (strain FB24), this protein is Small ribosomal subunit protein uS12.